The primary structure comprises 189 residues: Protein YOP1 (189 aa).

Topologically, residues 1–35 (MSQIIDQVQAALQNIDKELEKYPALKELEKQIPVP) are cytoplasmic. Residues 36–55 (KSYILLGFVGFYFILIFLNI) form a helical membrane-spanning segment. The Lumenal portion of the chain corresponds to 56–57 (GG). Residues 58 to 78 (IGQLLSNIAGLVIPGYYSLLA) traverse the membrane as a helical segment. Residues 79-88 (LETPGKADDT) lie on the Cytoplasmic side of the membrane. The helical transmembrane segment at 89–105 (QYLTYWVVFATLNVFEF) threads the bilayer. Topologically, residues 106-108 (WSK) are lumenal. The chain crosses the membrane as a helical span at residues 109–127 (AILYWVPFYYLFKTAFLLY). The Cytoplasmic portion of the chain corresponds to 128-189 (IGLPQYGGAE…PQGHSTGVSH (62 aa)).

The protein belongs to the DP1 family. Oligomer.

The protein resides in the endoplasmic reticulum membrane. It is found in the golgi apparatus membrane. Required to generate and maintain the structure of the tubular endoplasmic reticulum network and the vacuole. Induces high curvature in membranes and causes membrane tubule formation. Involved in membrane/vesicle trafficking. This is Protein YOP1 (YOP1) from Yarrowia lipolytica (strain CLIB 122 / E 150) (Yeast).